We begin with the raw amino-acid sequence, 230 residues long: Cutinase (230 aa).

An N-terminal signal peptide occupies residues Met-1 to Ala-16. The cysteines at positions 47 and 125 are disulfide-linked. Ser-136 functions as the Nucleophile in the catalytic mechanism. An intrachain disulfide couples Cys-187 to Cys-194. Asp-191 is a catalytic residue. His-204 serves as the catalytic Proton donor/acceptor.

Belongs to the cutinase family. Post-translationally, the 2 disulfide bonds play a critical role in holding the catalytic residues in juxta-position; reduction of the disulfide bridges results in the complete inactivation of the enzyme.

It localises to the secreted. It catalyses the reaction cutin + H2O = cutin monomers.. Catalyzes the hydrolysis of complex carboxylic polyesters found in the cell wall of plants. Degrades cutin, a macromolecule that forms the structure of the plant cuticle. Allows pathogenic fungi to penetrate through the cuticular barrier into the host plant during the initial stage of fungal infection. This Fusarium solani subsp. cucurbitae (Neocosmosporum cucurbitae) protein is Cutinase (CUTA).